The chain runs to 815 residues: Protein-glutamine gamma-glutamyltransferase K (815 aa).

2 disordered regions span residues 1 to 40 and 59 to 100; these read MDGPRSDVGRWGGNPWQPPTTPSPEPEPEPEPERRSRRGG and DDWG…AAGD. Residues 16–25 show a composition bias toward pro residues; the sequence is WQPPTTPSPE. Threonine 21 carries the phosphothreonine modification. A phosphoserine mark is found at serine 23, serine 80, serine 83, serine 90, and serine 93. The segment covering 59–87 has biased composition (basic and acidic residues); that stretch reads DDWGPEPHRDRGSGSGRRRPDSRGSDSRR. Active-site residues include cysteine 375, histidine 434, and aspartate 457. Residues asparagine 497, aspartate 499, glutamate 546, and glutamate 551 each contribute to the Ca(2+) site. Residues 795–815 form a disordered region; the sequence is SNAGGNSPLGETIPMASRGGA.

The protein belongs to the transglutaminase superfamily. Transglutaminase family. Interacts with PLAAT4. Ca(2+) is required as a cofactor. Post-translationally, palmitoylated. The membrane anchorage region possesses a cluster of five cysteines within which fatty acid(s) may become thioester-linked. It is subject to phorbol ester-stimulated phosphorylation and is hypersensitive to proteolysis, which releases the enzyme in a soluble form. In terms of processing, tyrosine-phosphorylated.

It localises to the membrane. The catalysed reaction is L-glutaminyl-[protein] + L-lysyl-[protein] = [protein]-L-lysyl-N(6)-5-L-glutamyl-[protein] + NH4(+). Its function is as follows. Catalyzes the cross-linking of proteins and the conjugation of polyamines to proteins. Responsible for cross-linking epidermal proteins during formation of the stratum corneum. Involved in cell proliferation. The protein is Protein-glutamine gamma-glutamyltransferase K (TGM1) of Canis lupus familiaris (Dog).